Reading from the N-terminus, the 301-residue chain is Probable alpha-L-glutamate ligase 2 (301 aa).

The 184-residue stretch at 104–287 (LQLLSRKGIG…VAEPIVEYIE (184 aa)) folds into the ATP-grasp domain. ATP is bound by residues K141, 178–179 (EY), D187, and 211–213 (RSN). Residues D248, E260, and N262 each coordinate Mg(2+). 3 residues coordinate Mn(2+): D248, E260, and N262.

Belongs to the RimK family. Mg(2+) is required as a cofactor. It depends on Mn(2+) as a cofactor.

The chain is Probable alpha-L-glutamate ligase 2 from Shewanella amazonensis (strain ATCC BAA-1098 / SB2B).